We begin with the raw amino-acid sequence, 351 residues long: Putative phospho-N-acetylmuramoyl-pentapeptide-transferase (351 aa).

10 helical membrane passes run 2–22 (MEFLMVFIISTVSAAVFTLFI), 44–64 (AGTPTMGGLGMLLALLLVTVL), 71–91 (LVLTSLIVLTAAIVGLLDDLL), 158–178 (GEKILAQLLIGVFLVLSGAVG), 181–201 (GGFYLGLAAAPIAIAGMVGAI), 212–232 (GMAAGIMLIASLSCAIFLGLS), 235–255 (ALPFLALAGMCAGFLVFNRHP), 258–278 (IFMGDTGSFALGAGYATAVML), 281–301 (TVYFGVLAIAVPVVSVIVSLL), and 328–348 (IVLLYWLITLIVCALGLYMTG).

This sequence belongs to the glycosyltransferase 4 family. MraY subfamily. It depends on Mg(2+) as a cofactor.

It localises to the cell membrane. The catalysed reaction is UDP-N-acetyl-alpha-D-muramoyl-L-alanyl-gamma-D-glutamyl-meso-2,6-diaminopimeloyl-D-alanyl-D-alanine + di-trans,octa-cis-undecaprenyl phosphate = di-trans,octa-cis-undecaprenyl diphospho-N-acetyl-alpha-D-muramoyl-L-alanyl-D-glutamyl-meso-2,6-diaminopimeloyl-D-alanyl-D-alanine + UMP. The polypeptide is Putative phospho-N-acetylmuramoyl-pentapeptide-transferase (Methanothermobacter thermautotrophicus (strain ATCC 29096 / DSM 1053 / JCM 10044 / NBRC 100330 / Delta H) (Methanobacterium thermoautotrophicum)).